Consider the following 79-residue polypeptide: uncharacterized protein (79 aa).

The protein resides in the mitochondrion. This is an uncharacterized protein from Oenothera berteroana (Bertero's evening primrose).